We begin with the raw amino-acid sequence, 359 residues long: Methionine import ATP-binding protein MetN (359 aa).

The segment at 1–21 (MSTPASTPAPDGSHQRDHHPG) is disordered. An ABC transporter domain is found at 24–264 (VEFRGVTKVF…PQTTVAQRFV (241 aa)). 61 to 68 (GYSGAGKS) provides a ligand contact to ATP.

The protein belongs to the ABC transporter superfamily. Methionine importer (TC 3.A.1.24) family. In terms of assembly, the complex is composed of two ATP-binding proteins (MetN), two transmembrane proteins (MetI) and a solute-binding protein (MetQ).

It is found in the cell membrane. The enzyme catalyses L-methionine(out) + ATP + H2O = L-methionine(in) + ADP + phosphate + H(+). It carries out the reaction D-methionine(out) + ATP + H2O = D-methionine(in) + ADP + phosphate + H(+). Functionally, part of the ABC transporter complex MetNIQ involved in methionine import. Responsible for energy coupling to the transport system. The polypeptide is Methionine import ATP-binding protein MetN (Corynebacterium efficiens (strain DSM 44549 / YS-314 / AJ 12310 / JCM 11189 / NBRC 100395)).